Here is a 323-residue protein sequence, read N- to C-terminus: Cytochrome c biogenesis protein CcsA (323 aa).

Transmembrane regions (helical) follow at residues 17–37 (VVSI…IVGF), 44–64 (GMII…FFSG), 68–88 (FSDL…FYMV), 98–118 (LSTI…SGLL), 143–163 (MILG…ILVI), 229–249 (IISL…VWAN), 262–279 (ETWA…LHSR), and 291–311 (IVAS…NLLG).

Belongs to the CcmF/CycK/Ccl1/NrfE/CcsA family. In terms of assembly, may interact with Ccs1.

Its subcellular location is the plastid. The protein localises to the chloroplast thylakoid membrane. Its function is as follows. Required during biogenesis of c-type cytochromes (cytochrome c6 and cytochrome f) at the step of heme attachment. This is Cytochrome c biogenesis protein CcsA from Lotus japonicus (Lotus corniculatus var. japonicus).